The primary structure comprises 126 residues: Ejaculatory bulb-specific protein 3 (126 aa).

Positions 1-17 (MKMILALVVLGLVLVAA) are cleaved as a signal peptide.

This sequence belongs to the insect A10/OS-D protein family. As to expression, specifically expressed in the ejaculatory bulb and seminal fluid.

Its subcellular location is the secreted. Protein component of the posterior mating plug. This is Ejaculatory bulb-specific protein 3 from Drosophila melanogaster (Fruit fly).